Consider the following 1045-residue polypeptide: FERM, ARHGEF and pleckstrin domain-containing protein 1 (1045 aa).

Residues 1 to 37 form a disordered region; that stretch reads MGEIEQRPTPGSRLGAPENSGISTLERGQKPPPTPSG. Phosphoserine is present on residues S20 and S23. T24 carries the post-translational modification Phosphothreonine. The region spanning 40–320 is the FERM domain; sequence VSIKIQMLDD…EHHAFFRLFE (281 aa). A phosphoserine mark is found at S340, S373, S389, S403, S418, S427, and S433. Residues 392–534 are disordered; it reads SASLTFGEGA…TDDEDEGRRK (143 aa). 2 stretches are compositionally biased toward polar residues: residues 471–489 and 496–511; these read TGSL…NSQG and VTLS…QASP. 2 positions are modified to phosphoserine: S510 and S514. The DH domain maps to 540–730; that stretch reads KAYFIAKEVS…TEMVAQLHGT (191 aa). One can recognise a PH 1 domain in the interval 759–856; sequence EFIRLGSLSK…WVEDIQMAID (98 aa). Phosphoserine is present on residues S833, S872, and S878. The disordered stretch occupies residues 866–902; the sequence is PEFLASSPPDNKSPDEATAADQESEDDLSASRTSLER. T883 is subject to Phosphothreonine. Phosphoserine occurs at positions 889, 896, and 899. Residues 932-1029 form the PH 2 domain; sequence ENQLSGNLLR…WMEVIRSATS (98 aa).

As to quaternary structure, interacts with CADM1. Interacts with RAC1.

The protein localises to the cell membrane. It localises to the synapse. It is found in the synaptosome. Its subcellular location is the cytoplasm. The protein resides in the cytosol. The protein localises to the cell projection. It localises to the filopodium. It is found in the dendrite. Its subcellular location is the dendritic spine. Functionally, functions as a guanine nucleotide exchange factor for RAC1. May play a role in semaphorin signaling. Plays a role in the assembly and disassembly of dendritic filopodia, the formation of dendritic spines, regulation of dendrite length and ultimately the formation of synapses. This is FERM, ARHGEF and pleckstrin domain-containing protein 1 (FARP1) from Pongo abelii (Sumatran orangutan).